A 257-amino-acid chain; its full sequence is 5'-nucleotidase SurE (257 aa).

Asp-8, Asp-9, Ser-40, and Asn-92 together coordinate a divalent metal cation.

Belongs to the SurE nucleotidase family. A divalent metal cation is required as a cofactor.

The protein resides in the cytoplasm. It carries out the reaction a ribonucleoside 5'-phosphate + H2O = a ribonucleoside + phosphate. Nucleotidase that shows phosphatase activity on nucleoside 5'-monophosphates. In Rhizobium leguminosarum bv. trifolii (strain WSM2304), this protein is 5'-nucleotidase SurE.